The chain runs to 433 residues: tRNA-2-methylthio-N(6)-dimethylallyladenosine synthase (433 aa).

The 116-residue stretch at 3 to 118 (KKLFIQTLGC…ITKAVNTPKF (116 aa)) folds into the MTTase N-terminal domain. Residues Cys-12, Cys-49, Cys-81, Cys-150, Cys-154, and Cys-157 each coordinate [4Fe-4S] cluster. Positions 136 to 369 (RGSPYKSHIN…QNRHSEILDE (234 aa)) constitute a Radical SAM core domain. One can recognise a TRAM domain in the interval 372-433 (AAQKDKIFDV…RMVLYGELQI (62 aa)).

This sequence belongs to the methylthiotransferase family. MiaB subfamily. In terms of assembly, monomer. Requires [4Fe-4S] cluster as cofactor.

Its subcellular location is the cytoplasm. It carries out the reaction N(6)-dimethylallyladenosine(37) in tRNA + (sulfur carrier)-SH + AH2 + 2 S-adenosyl-L-methionine = 2-methylsulfanyl-N(6)-dimethylallyladenosine(37) in tRNA + (sulfur carrier)-H + 5'-deoxyadenosine + L-methionine + A + S-adenosyl-L-homocysteine + 2 H(+). Catalyzes the methylthiolation of N6-(dimethylallyl)adenosine (i(6)A), leading to the formation of 2-methylthio-N6-(dimethylallyl)adenosine (ms(2)i(6)A) at position 37 in tRNAs that read codons beginning with uridine. This is tRNA-2-methylthio-N(6)-dimethylallyladenosine synthase from Campylobacter concisus (strain 13826).